The chain runs to 739 residues: Nuclear pore complex protein NUP62 (739 aa).

19 tandem repeats follow at residues F6 to G7, F17 to G18, F50 to G51, F52 to G53, F68 to G69, F70 to G71, F78 to G79, F80 to G81, F91 to G92, F93 to G94, F108 to G109, F110 to G111, F124 to G125, F141 to G142, F159 to G160, F174 to G175, F186 to G187, F207 to G208, and F221 to G222. Residues F6 to G450 form a 26 X 2 AA repeats of F-G region. The segment at G18–S67 is disordered. A compositionally biased stretch (low complexity) spans G79 to S218. The interval G79–S245 is disordered. Positions P232–S245 are enriched in low complexity. 5 repeat units span residues F248–G249, F271–G272, F280–G281, F308–G309, and F366–G367. 3 disordered regions span residues G281–F329, T341–F366, and T399–A418. 2 consecutive repeat copies span residues F426–G427 and F449–G450. Residues K471–K533 are disordered. The span at T472 to S519 shows a compositional bias: low complexity. The stretch at R584–A674 forms a coiled coil.

It belongs to the nucleoporin NSP1/NUP62 family. In terms of assembly, part of the nuclear pore complex (NPC). The NPC has an eight-fold symmetrical structure comprising a central transport channel and two rings, the cytoplasmic and nuclear rings, to which eight filaments are attached. The cytoplasmic filaments have loose ends, while the nuclear filaments are joined in a distal ring, forming a nuclear basket. NPCs are highly dynamic in configuration and composition, and can be devided in 3 subcomplexes, the NUP62 subcomplex, the NUP107-160 subcomplex and the NUP93 subcomplex, containing approximately 30 different nucleoporin proteins. Interacts with NUP58 and the importin KPNB1.

It localises to the nucleus envelope. The protein localises to the nucleus. It is found in the nuclear pore complex. This is Nuclear pore complex protein NUP62 from Arabidopsis thaliana (Mouse-ear cress).